The sequence spans 130 residues: Protachykinin-1 (130 aa).

A signal peptide spans 1-19 (MKILVAVAVFFLVSTQLSA). The propeptide occupies 20-56 (EEIGANDDLNYWSDWSDSDQIKEALPEPFEHILQRIA). Residues M68 and M107 each carry the methionine amide modification.

It belongs to the tachykinin family. The substance P form is cleaved at Pro-59 by the prolyl endopeptidase FAP (seprase) activity (in vitro). Substance P is also cleaved and degraded by Angiotensin-converting enzyme (ACE) and neprilysin (MME).

The protein localises to the secreted. Its function is as follows. Tachykinins are active peptides which excite neurons, evoke behavioral responses, are potent vasodilators and secretagogues, and contract (directly or indirectly) many smooth muscles. In Mesocricetus auratus (Golden hamster), this protein is Protachykinin-1 (TAC1).